The chain runs to 388 residues: Succinate--CoA ligase [ADP-forming] subunit beta (388 aa).

An ATP-grasp domain is found at 9-244 (KQLFAEYGLP…PSQEDEREAH (236 aa)). Residues Lys46, 53–55 (GRG), Glu99, Thr102, and Glu107 contribute to the ATP site. Mg(2+)-binding residues include Asn199 and Asp213. Residues Asn264 and 321–323 (GIV) each bind substrate.

The protein belongs to the succinate/malate CoA ligase beta subunit family. In terms of assembly, heterotetramer of two alpha and two beta subunits. It depends on Mg(2+) as a cofactor.

It catalyses the reaction succinate + ATP + CoA = succinyl-CoA + ADP + phosphate. The catalysed reaction is GTP + succinate + CoA = succinyl-CoA + GDP + phosphate. Its pathway is carbohydrate metabolism; tricarboxylic acid cycle; succinate from succinyl-CoA (ligase route): step 1/1. Its function is as follows. Succinyl-CoA synthetase functions in the citric acid cycle (TCA), coupling the hydrolysis of succinyl-CoA to the synthesis of either ATP or GTP and thus represents the only step of substrate-level phosphorylation in the TCA. The beta subunit provides nucleotide specificity of the enzyme and binds the substrate succinate, while the binding sites for coenzyme A and phosphate are found in the alpha subunit. The sequence is that of Succinate--CoA ligase [ADP-forming] subunit beta from Colwellia psychrerythraea (strain 34H / ATCC BAA-681) (Vibrio psychroerythus).